The primary structure comprises 123 residues: Large ribosomal subunit protein uL18 (123 aa).

This sequence belongs to the universal ribosomal protein uL18 family. As to quaternary structure, part of the 50S ribosomal subunit; part of the 5S rRNA/L5/L18/L25 subcomplex. Contacts the 5S and 23S rRNAs.

This is one of the proteins that bind and probably mediate the attachment of the 5S RNA into the large ribosomal subunit, where it forms part of the central protuberance. This Bifidobacterium longum (strain DJO10A) protein is Large ribosomal subunit protein uL18.